The sequence spans 133 residues: UPF0146 protein MTH_1000 (133 aa).

It belongs to the UPF0146 family.

This is UPF0146 protein MTH_1000 from Methanothermobacter thermautotrophicus (strain ATCC 29096 / DSM 1053 / JCM 10044 / NBRC 100330 / Delta H) (Methanobacterium thermoautotrophicum).